Here is a 305-residue protein sequence, read N- to C-terminus: Protoheme IX farnesyltransferase (305 aa).

9 helical membrane passes run 38–58 (FITT…SFLG), 60–80 (LDIV…SCAI), 110–130 (AYAF…MTTV), 131–151 (TSAV…TMWS), 161–181 (IGSV…TGTI), 185–205 (AWVL…SLAI), 227–247 (VTKR…FFLG), 249–269 (LGWP…VIGL), and 285–305 (FVYS…ITLF).

This sequence belongs to the UbiA prenyltransferase family. Protoheme IX farnesyltransferase subfamily. Interacts with CtaA.

Its subcellular location is the cell membrane. It carries out the reaction heme b + (2E,6E)-farnesyl diphosphate + H2O = Fe(II)-heme o + diphosphate. It functions in the pathway porphyrin-containing compound metabolism; heme O biosynthesis; heme O from protoheme: step 1/1. Its function is as follows. Converts heme B (protoheme IX) to heme O by substitution of the vinyl group on carbon 2 of heme B porphyrin ring with a hydroxyethyl farnesyl side group. The polypeptide is Protoheme IX farnesyltransferase (Bacillus pumilus (strain SAFR-032)).